Reading from the N-terminus, the 317-residue chain is UAP56-interacting factor (317 aa).

The residue at position 1 (Met-1) is an N-acetylmethionine. The tract at residues 1–23 (MNRFGTRLVGATATTPPAPKARS) is disordered. Thr-14 carries the phosphothreonine modification. Residue Ser-23 is modified to Phosphoserine. A UAP56-binding motif motif is present at residues 26–44 (NLDKIDMSLDEIIKLNRKE). Phosphoserine occurs at positions 60 and 117. Lys-139 participates in a covalent cross-link: Glycyl lysine isopeptide (Lys-Gly) (interchain with G-Cter in SUMO1). Residue Lys-260 forms a Glycyl lysine isopeptide (Lys-Gly) (interchain with G-Cter in SUMO2) linkage.

It belongs to the UIF family. As to quaternary structure, interacts with DDX39B/UAP56 and NXF1; interaction with DDX39B/UAP56 and NXF1 are mutually exclusive. Interacts with SSRP1; required for its recruitment to mRNAs. Interacts with CHTOP.

The protein localises to the nucleus. Its subcellular location is the nucleoplasm. It is found in the nucleus speckle. Functionally, required for mRNA export from the nucleus to the cytoplasm. Acts as an adapter that uses the DDX39B/UAP56-NFX1 pathway to ensure efficient mRNA export and delivering to the nuclear pore. Associates with spliced and unspliced mRNAs simultaneously with ALYREF/THOC4. In Rattus norvegicus (Rat), this protein is UAP56-interacting factor (Fyttd1).